We begin with the raw amino-acid sequence, 164 residues long: MYCPFCSAQDTKVIDSRLVADGVQIRRRRECLSCTERFTTFETAELVMPRLVKTDGTRQPFDEAKLRAGMLRALEKRPVSMEDLEAAISRICHRLRATGERELPARELGEFVMEELQQLDDVAYVRFASVYRSFQDISEFSAEVDRLKKAGGKPGDKLGEPKES.

A zinc finger spans residues 3–34 (CPFCSAQDTKVIDSRLVADGVQIRRRRECLSC). Positions 49-139 (PRLVKTDGTR…VYRSFQDISE (91 aa)) constitute an ATP-cone domain.

This sequence belongs to the NrdR family. Zn(2+) serves as cofactor.

In terms of biological role, negatively regulates transcription of bacterial ribonucleotide reductase nrd genes and operons by binding to NrdR-boxes. The chain is Transcriptional repressor NrdR from Alcanivorax borkumensis (strain ATCC 700651 / DSM 11573 / NCIMB 13689 / SK2).